Consider the following 739-residue polypeptide: Phosphoribosylformylglycinamidine synthase subunit PurL (739 aa).

Residue H54 is part of the active site. ATP is bound by residues Y57 and K96. E98 contributes to the Mg(2+) binding site. Substrate contacts are provided by residues 99-102 (SHNH) and R121. H100 functions as the Proton acceptor in the catalytic mechanism. A Mg(2+)-binding site is contributed by D122. Position 245 (Q245) interacts with substrate. Residue D273 participates in Mg(2+) binding. A substrate-binding site is contributed by 317-319 (ESQ). Residues D500 and G537 each contribute to the ATP site. A Mg(2+)-binding site is contributed by N538. S540 contacts substrate.

It belongs to the FGAMS family. In terms of assembly, monomer. Part of the FGAM synthase complex composed of 1 PurL, 1 PurQ and 2 PurS subunits.

Its subcellular location is the cytoplasm. The catalysed reaction is N(2)-formyl-N(1)-(5-phospho-beta-D-ribosyl)glycinamide + L-glutamine + ATP + H2O = 2-formamido-N(1)-(5-O-phospho-beta-D-ribosyl)acetamidine + L-glutamate + ADP + phosphate + H(+). It participates in purine metabolism; IMP biosynthesis via de novo pathway; 5-amino-1-(5-phospho-D-ribosyl)imidazole from N(2)-formyl-N(1)-(5-phospho-D-ribosyl)glycinamide: step 1/2. In terms of biological role, part of the phosphoribosylformylglycinamidine synthase complex involved in the purines biosynthetic pathway. Catalyzes the ATP-dependent conversion of formylglycinamide ribonucleotide (FGAR) and glutamine to yield formylglycinamidine ribonucleotide (FGAM) and glutamate. The FGAM synthase complex is composed of three subunits. PurQ produces an ammonia molecule by converting glutamine to glutamate. PurL transfers the ammonia molecule to FGAR to form FGAM in an ATP-dependent manner. PurS interacts with PurQ and PurL and is thought to assist in the transfer of the ammonia molecule from PurQ to PurL. This Bacillus anthracis (strain A0248) protein is Phosphoribosylformylglycinamidine synthase subunit PurL.